Reading from the N-terminus, the 480-residue chain is NADH-quinone oxidoreductase subunit N (480 aa).

13 helical membrane-spanning segments follow: residues 5–25 (NFLC…LFLY), 40–60 (IAIV…FTMY), 69–89 (ISSQ…FLVF), 110–130 (VIML…NFVM), 162–182 (YILT…FLYG), 204–224 (LGFV…PFHL), 237–257 (VTAY…IFVL), 266–286 (LIWN…GNLF), 296–316 (FFAF…IAGT), 324–344 (IFYT…IASV), 368–388 (AFVM…AGFF), 404–424 (ILVF…LLIV), and 450–470 (MVIC…YEYI).

This sequence belongs to the complex I subunit 2 family. In terms of assembly, NDH-1 is composed of 14 different subunits. Subunits NuoA, H, J, K, L, M, N constitute the membrane sector of the complex.

The protein localises to the cell inner membrane. It carries out the reaction a quinone + NADH + 5 H(+)(in) = a quinol + NAD(+) + 4 H(+)(out). Its function is as follows. NDH-1 shuttles electrons from NADH, via FMN and iron-sulfur (Fe-S) centers, to quinones in the respiratory chain. The immediate electron acceptor for the enzyme in this species is believed to be a menaquinone. Couples the redox reaction to proton translocation (for every two electrons transferred, four hydrogen ions are translocated across the cytoplasmic membrane), and thus conserves the redox energy in a proton gradient. This is NADH-quinone oxidoreductase subunit N from Azobacteroides pseudotrichonymphae genomovar. CFP2.